The chain runs to 382 residues: Glutamyl-tRNA reductase (382 aa).

Residues 38-41 (TCNR), Ser-85, 90-92 (ENQ), and Gln-96 contribute to the substrate site. Cys-39 (nucleophile) is an active-site residue. Residue 164-169 (GAGEIG) participates in NADP(+) binding.

The protein belongs to the glutamyl-tRNA reductase family. Homodimer.

The enzyme catalyses (S)-4-amino-5-oxopentanoate + tRNA(Glu) + NADP(+) = L-glutamyl-tRNA(Glu) + NADPH + H(+). It participates in porphyrin-containing compound metabolism; protoporphyrin-IX biosynthesis; 5-aminolevulinate from L-glutamyl-tRNA(Glu): step 1/2. Its function is as follows. Catalyzes the NADPH-dependent reduction of glutamyl-tRNA(Glu) to glutamate 1-semialdehyde (GSA). The protein is Glutamyl-tRNA reductase of Methanococcus maripaludis (strain DSM 14266 / JCM 13030 / NBRC 101832 / S2 / LL).